The sequence spans 194 residues: Holliday junction branch migration complex subunit RuvA (194 aa).

Residues 1-64 are domain I; it reads MISRLTGKLV…EDAHLLFGFA (64 aa). The domain II stretch occupies residues 65–143; sequence TAEERKTFRQ…AHTVTDGLFA (79 aa). Residues 144-147 are flexible linker; that stretch reads AAPA. The domain III stretch occupies residues 147–194; it reads AADETEDIVSTLLALGYSEREAKAAVKGVPEGTDVGEGVRLALKNLLK.

The protein belongs to the RuvA family. Homotetramer. Forms an RuvA(8)-RuvB(12)-Holliday junction (HJ) complex. HJ DNA is sandwiched between 2 RuvA tetramers; dsDNA enters through RuvA and exits via RuvB. An RuvB hexamer assembles on each DNA strand where it exits the tetramer. Each RuvB hexamer is contacted by two RuvA subunits (via domain III) on 2 adjacent RuvB subunits; this complex drives branch migration. In the full resolvosome a probable DNA-RuvA(4)-RuvB(12)-RuvC(2) complex forms which resolves the HJ.

It localises to the cytoplasm. The RuvA-RuvB-RuvC complex processes Holliday junction (HJ) DNA during genetic recombination and DNA repair, while the RuvA-RuvB complex plays an important role in the rescue of blocked DNA replication forks via replication fork reversal (RFR). RuvA specifically binds to HJ cruciform DNA, conferring on it an open structure. The RuvB hexamer acts as an ATP-dependent pump, pulling dsDNA into and through the RuvAB complex. HJ branch migration allows RuvC to scan DNA until it finds its consensus sequence, where it cleaves and resolves the cruciform DNA. The sequence is that of Holliday junction branch migration complex subunit RuvA from Neisseria meningitidis serogroup C (strain 053442).